The chain runs to 405 residues: Phosphoglycerate kinase (405 aa).

Substrate is bound by residues 24-26 (DFN), Arg-40, 63-66 (HLGR), Arg-122, and Arg-162. ATP contacts are provided by residues Lys-212, Glu-331, and 361–364 (GGDS).

It belongs to the phosphoglycerate kinase family. As to quaternary structure, monomer.

Its subcellular location is the cytoplasm. The enzyme catalyses (2R)-3-phosphoglycerate + ATP = (2R)-3-phospho-glyceroyl phosphate + ADP. It functions in the pathway carbohydrate degradation; glycolysis; pyruvate from D-glyceraldehyde 3-phosphate: step 2/5. The polypeptide is Phosphoglycerate kinase (Corynebacterium aurimucosum (strain ATCC 700975 / DSM 44827 / CIP 107346 / CN-1) (Corynebacterium nigricans)).